Reading from the N-terminus, the 80-residue chain is Raniseptin-7 (80 aa).

The signal sequence occupies residues 1–22; the sequence is MAFLKKSLFLVLFLGIVSLSIC. The propeptide occupies 23–49; it reads EEEKREGEEEEKQEEENEELSEEELRE. The disordered stretch occupies residues 27–46; that stretch reads REGEEEEKQEEENEELSEEE. A compositionally biased stretch (acidic residues) spans 30–44; the sequence is EEEEKQEEENEELSE.

The protein belongs to the frog skin active peptide (FSAP) family. Dermaseptin subfamily. As to expression, expressed by the skin glands.

It is found in the secreted. Functionally, has antibacterial activity. This is Raniseptin-7 from Boana raniceps (Chaco tree frog).